A 67-amino-acid chain; its full sequence is DNA-directed RNA polymerase subunit omega (67 aa).

The protein belongs to the RNA polymerase subunit omega family. As to quaternary structure, the RNAP catalytic core consists of 2 alpha, 1 beta, 1 beta' and 1 omega subunit. When a sigma factor is associated with the core the holoenzyme is formed, which can initiate transcription.

It catalyses the reaction RNA(n) + a ribonucleoside 5'-triphosphate = RNA(n+1) + diphosphate. In terms of biological role, promotes RNA polymerase assembly. Latches the N- and C-terminal regions of the beta' subunit thereby facilitating its interaction with the beta and alpha subunits. The polypeptide is DNA-directed RNA polymerase subunit omega (Albidiferax ferrireducens (strain ATCC BAA-621 / DSM 15236 / T118) (Rhodoferax ferrireducens)).